The sequence spans 635 residues: Threonine--tRNA ligase (635 aa).

One can recognise a TGS domain in the interval 1–61; it reads MIAITLPDGS…DRDVALAIIT (61 aa). The catalytic stretch occupies residues 242–533; it reads DHRKLGKSLD…LLENHAGALP (292 aa). Residues Cys333, His384, and His510 each contribute to the Zn(2+) site.

Belongs to the class-II aminoacyl-tRNA synthetase family. In terms of assembly, homodimer. Zn(2+) is required as a cofactor.

Its subcellular location is the cytoplasm. It catalyses the reaction tRNA(Thr) + L-threonine + ATP = L-threonyl-tRNA(Thr) + AMP + diphosphate + H(+). Catalyzes the attachment of threonine to tRNA(Thr) in a two-step reaction: L-threonine is first activated by ATP to form Thr-AMP and then transferred to the acceptor end of tRNA(Thr). Also edits incorrectly charged L-seryl-tRNA(Thr). The chain is Threonine--tRNA ligase from Cupriavidus pinatubonensis (strain JMP 134 / LMG 1197) (Cupriavidus necator (strain JMP 134)).